Reading from the N-terminus, the 232-residue chain is Phosphoribosylaminoimidazole-succinocarboxamide synthase (232 aa).

Belongs to the SAICAR synthetase family.

It carries out the reaction 5-amino-1-(5-phospho-D-ribosyl)imidazole-4-carboxylate + L-aspartate + ATP = (2S)-2-[5-amino-1-(5-phospho-beta-D-ribosyl)imidazole-4-carboxamido]succinate + ADP + phosphate + 2 H(+). It participates in purine metabolism; IMP biosynthesis via de novo pathway; 5-amino-1-(5-phospho-D-ribosyl)imidazole-4-carboxamide from 5-amino-1-(5-phospho-D-ribosyl)imidazole-4-carboxylate: step 1/2. The protein is Phosphoribosylaminoimidazole-succinocarboxamide synthase of Finegoldia magna (strain ATCC 29328 / DSM 20472 / WAL 2508) (Peptostreptococcus magnus).